A 179-amino-acid polypeptide reads, in one-letter code: Replication restart protein DnaT (179 aa).

A disordered region spans residues 156–179 (GGLPKRDVNTVSEPDSQIPPGFRG).

It belongs to the DnaT family. As to quaternary structure, homooligomerizes. Interacts with PriB. Component of the replication restart primosome. Primosome assembly occurs via a 'hand-off' mechanism. PriA binds to replication forks, subsequently PriB then DnaT bind; DnaT then displaces ssDNA to generate the helicase loading substrate.

Involved in the restart of stalled replication forks, which reloads the replicative helicase on sites other than the origin of replication. Can function in multiple replication restart pathways. Displaces ssDNA from a PriB-ssDNA complex. Probably forms a spiral filament on ssDNA. This chain is Replication restart protein DnaT, found in Shigella dysenteriae serotype 1 (strain Sd197).